Here is a 2266-residue protein sequence, read N- to C-terminus: MSVTLSPPGDCFTFNHVKYNNSLNKYLFYNNNLDIVLDDFDFYFNFYAKKYNVLSSFFSDRVLSALYTPMSVSEAASLALEDFCELALDKLKINPFHQLWEETLANWPVYPGTSLLDFFRTQYEIRREVAEASAEALRLKKATRADAFADEVKFLIKNGVLPHLAGDFARKIWSTGKDQKKTRTAFLVKIKKANQLKQQWNSARSLAAARAEVLREFEPSPQQIQKAIEAQLFAEKLGRKYATLTARVRAKRAAARELREKQLYQETVDLLNASLLPPMEKVEIERKYRKVRPTGANVVHQVVANPLGSLCPYMGLGAKTADVRCQATLMAGKIHAQYPRLATAIYAWVIGPAAHFECITPVRNFVKGLTFMVDFFPEEALIHELNEITTEAVCIGASMVLDEERAKLEAHAQSANCRANVFMKAMAGVKNMAKCAYTGFKTGCEEAGRSLAEGICSVMMRSFRECIAQIKTELGCAIEMVEVMIKKVKDWFYSMLEKLQCGLETLGSYAMYALAILLGCGLTSLLERCIGGQGILTKLFITGVLAAIGLQAAGGFDNLQREMVQLCTALAAGIFDIQHAGNGKYKPSWDITAEHAREDARDSNVRSIPIISGVIEALAQFGTGLCSMQSATLIEIGKIGAACHSMRMGKEALKEFCATLMYYLGRIADKVTGRETIFFDELSTLVHVDVRGWIKRAQSCMRESFHTEIGNQFFRDMVAQLVDEGQKLQIGVNGIPRKISADYSQLIGQIMKDLVELHKRTIRAGISEGRRCEPVWIYLFGQRHCGKSNFMSTLDNALAKHFNLPNTTAYRNCKDAFYSGYSGQTFFHMDDLSSVKLEPPLEAELINLVSCQEVPLNMADLADKPIYFRSPFIISSSNFEDVPAGCGVRDIEAYRARKACLVEMRRKPGVIYDPENPLLASQARFKDPMYQTLINGQTEETSWMEMDDVVTEIINISARHRSAQEKLQARYMREKALLDPLALASESFLVKEAQKVFLDFDGVELEKAGVPRPEGGHGLYVDGVLYLVNASFEFDEIPIKDGGYQRLWDSRMRKKFLPAIQRDEHLNTKSMVVTGFLRSLVNGECAVLSKDTLTASATTAQLSIFKALRLEERVYLRTLQHQLDLYSQDIPENPYCNSAWVKVLGAIGAGRDYLVQNGCGILMIAAALILILVSGWGFWKLFVGLFSGTMSLGAAITGMSAVDIKAQQSSASQEKGYRARNIPIHHRYAYARSQAGDGLLPAARLCVAIYQPGGGFVSAMQYKNKSVRMTRHQALRFKEGEQLTVIFASTGESQLIRWHKYHMREEHGSEIVTWLAPSLPALSPDLKDLFLEDKEVDLPNHFKTIGYVLRVDSTAFHYDTLDTYGAVDKTPLPLKGVVGNELYLHEIPEKIVFHYESRNDDCGMIMLCQIRGKMRVVGMLVAGKDKTSWADIMPPNSLAELKSQIDYIPEFGEACDGYFKAGYVHKSEAPTLPKKTNMVPVPESLRVPCDVPVKEPAVLTKDDPRCPIGVDPPRAALKKKFTQPMMELEQEILDEVATDILETWYDCEDHVLSDISLSVAINGIPADSEEAELENFVMKTSPGYPYFKNNRAEKLKGKHAYFEEAEDGSLQLKKGGMAAELHENLVEFTKNEVPELVVIECTKDELLPERKIKVGACRLFEIMPLHYNLFLRQKTCAFTQFLQHNRHRLPCQVGTNPYSREWGHMLNRLMRPKTNEAINCDYSGFDGLLNPQLIECIARMINRLYALSGESDVQQAQRYNMLMALVGRYAFVGQQVYKVNCGLPSGFALTVVVNSVFNEILIRYAYKKLAPAPERNRFGSTVCLLVYGDDNLISVSPSIASWFTGEAIRITLAEKKVKITDGSDKDAPTIEAKSFWELDFLKRKFLKLDNGIVQAPLDRSAIFSSLYWLTPDKSKFHESQKPSDFQGEVDVIEELLLNVNVALMELYLHNDVAEFQRVRGFYAQRLPLMVSQLRTWAFCEAFHSAQQTGMQKYDPAVVLDHMSGVDFKRFMHMSEQGNKAHFYTEMLGVSGPHYKPQEGDFIVSNQPLKPGVQGEYVPIVFGEGIGGLPTKKWVGDFGKPSQLKNSKGYLITGLLREQIEAGKRLIFMGPAPYVANNAALISFGSAHKMLIQKDALAHYRNVIPESTSGLEQYFDAPIPQASVGTFYFGDGETYTALCEYKDGKVLQYEGLPTAILNQAAKDRKVPCMVARQWKSKFTVRMACDSNMCPHHSATCANFELAFKQCWLSKCKCAGNNVSKWYGTKFS.

The Cytoplasmic segment spans residues 566 to 1158; sequence LCTALAAGIF…AGRDYLVQNG (593 aa). The region spanning 751 to 917 is the SF3 helicase domain; that stretch reads MKDLVELHKR…PGVIYDPENP (167 aa). 781–788 contacts ATP; sequence GQRHCGKS. A helical membrane pass occupies residues 1159–1179; that stretch reads CGILMIAAALILILVSGWGFW. Over 1180–1205 the chain is Lumenal; it reads KLFVGLFSGTMSLGAAITGMSAVDIK. The Peptidase C3 domain maps to 1229–1438; sequence AYARSQAGDG…WADIMPPNSL (210 aa). Residues histidine 1272, glutamate 1310, and cysteine 1402 each act as for picornain 3C-like protease activity in the active site. Positions 1715–1843 constitute a RdRp catalytic domain; it reads NEAINCDYSG…SVSPSIASWF (129 aa).

It belongs to the nepoviruses RNA1 polyprotein family. Specific enzymatic cleavages by picornain 3C-like protease in vivo yield mature proteins. Picornain 3C-like protease is autocatalytically processed. In terms of processing, VPg is uridylylated by the polymerase and is covalently linked to the 5'-end of genomic RNA. This uridylylated form acts as a nucleotide-peptide primer for the polymerase.

It is found in the host endoplasmic reticulum lumen. The protein localises to the host endoplasmic reticulum membrane. The enzyme catalyses RNA(n) + a ribonucleoside 5'-triphosphate = RNA(n+1) + diphosphate. In terms of biological role, picornain 3C-like protease is a thiol protease that cleaves the P1 and P2 polyproteins. In Tomato black ring virus (strain MJ) (TBRV), this protein is RNA1 polyprotein.